A 37-amino-acid polypeptide reads, in one-letter code: Neuropeptide Y2-like conopeptide (37 aa).

Residue Y37 is modified to Tyrosine amide.

It belongs to the NPY family. As to expression, expressed by the venom duct.

It is found in the secreted. Causes hyperactivity such as jumping, rapid circling and tail flicking, after intraventicular injection into mouse brain. This chain is Neuropeptide Y2-like conopeptide, found in Conus betulinus (Beech cone).